Consider the following 218-residue polypeptide: Autophagy-related protein 101 (218 aa).

This sequence belongs to the ATG101 family.

The protein resides in the cytoplasm. It localises to the preautophagosomal structure. In terms of biological role, autophagy factor required for autophagosome formation. The chain is Autophagy-related protein 101 (atg101) from Xenopus laevis (African clawed frog).